The primary structure comprises 505 residues: L-carnitine/gamma-butyrobetaine antiporter (505 aa).

12 helical membrane-spanning segments follow: residues 10–30 (IEPK…WLTV), 51–71 (WGWA…WLVF), 92–112 (IFMM…SIEI), 143–163 (GPLP…FFFV), 195–215 (FYLV…TPLV), 231–251 (LDAI…ACGL), 263–283 (SYLS…SFIM), 316–336 (WTVF…IFLA), 347–367 (LCFG…TVLG), 403–423 (LSTA…VTLI), 446–466 (LLVR…LLAL), and 475–495 (AIIA…LSFI).

The protein belongs to the BCCT transporter (TC 2.A.15) family. CaiT subfamily. In terms of assembly, homotrimer.

It is found in the cell inner membrane. It catalyses the reaction 4-(trimethylamino)butanoate(in) + (R)-carnitine(out) = 4-(trimethylamino)butanoate(out) + (R)-carnitine(in). It functions in the pathway amine and polyamine metabolism; carnitine metabolism. Functionally, catalyzes the exchange of L-carnitine for gamma-butyrobetaine. This Salmonella paratyphi A (strain ATCC 9150 / SARB42) protein is L-carnitine/gamma-butyrobetaine antiporter.